Reading from the N-terminus, the 351-residue chain is Dual-specificity RNA methyltransferase RlmN (351 aa).

Glu-90 functions as the Proton acceptor in the catalytic mechanism. The Radical SAM core domain occupies 96 to 330 (EKDHYTACLS…ATLRKSKGSD (235 aa)). Cys-103 and Cys-335 form a disulfide bridge. The [4Fe-4S] cluster site is built by Cys-110, Cys-114, and Cys-117. Residues 162–163 (GE), Ser-194, 216–218 (SLH), and Asn-292 contribute to the S-adenosyl-L-methionine site. Cys-335 serves as the catalytic S-methylcysteine intermediate.

Belongs to the radical SAM superfamily. RlmN family. Requires [4Fe-4S] cluster as cofactor.

Its subcellular location is the cytoplasm. It catalyses the reaction adenosine(2503) in 23S rRNA + 2 reduced [2Fe-2S]-[ferredoxin] + 2 S-adenosyl-L-methionine = 2-methyladenosine(2503) in 23S rRNA + 5'-deoxyadenosine + L-methionine + 2 oxidized [2Fe-2S]-[ferredoxin] + S-adenosyl-L-homocysteine. It carries out the reaction adenosine(37) in tRNA + 2 reduced [2Fe-2S]-[ferredoxin] + 2 S-adenosyl-L-methionine = 2-methyladenosine(37) in tRNA + 5'-deoxyadenosine + L-methionine + 2 oxidized [2Fe-2S]-[ferredoxin] + S-adenosyl-L-homocysteine. Functionally, specifically methylates position 2 of adenine 2503 in 23S rRNA and position 2 of adenine 37 in tRNAs. m2A2503 modification seems to play a crucial role in the proofreading step occurring at the peptidyl transferase center and thus would serve to optimize ribosomal fidelity. The chain is Dual-specificity RNA methyltransferase RlmN from Solidesulfovibrio magneticus (strain ATCC 700980 / DSM 13731 / RS-1) (Desulfovibrio magneticus).